We begin with the raw amino-acid sequence, 436 residues long: GTPase Der (436 aa).

2 EngA-type G domains span residues 4–167 (SVVA…PNES) and 176–351 (IYFS…ESHT). Residues 10 to 17 (GRPNVGKS), 57 to 61 (DTGGI), 119 to 122 (NKMD), 182 to 189 (GRPNVGKS), 229 to 233 (DTAGM), and 294 to 297 (NKWD) contribute to the GTP site. In terms of domain architecture, KH-like spans 352–436 (KRIPTNVLND…PIKLFARRRQ (85 aa)).

The protein belongs to the TRAFAC class TrmE-Era-EngA-EngB-Septin-like GTPase superfamily. EngA (Der) GTPase family. Associates with the 50S ribosomal subunit.

Its function is as follows. GTPase that plays an essential role in the late steps of ribosome biogenesis. This Oceanobacillus iheyensis (strain DSM 14371 / CIP 107618 / JCM 11309 / KCTC 3954 / HTE831) protein is GTPase Der.